A 170-amino-acid chain; its full sequence is Cathelicidin antimicrobial peptide (170 aa).

The N-terminal stretch at 1–30 (MDTQRDSPSLGRWSLVLLLLGLVMPLAIVA) is a signal peptide. Positions 31–131 (QVLSYQEAVL…DISCDKDNRR (101 aa)) are cleaved as a propeptide — cathelin-like domain (CLD). 2 cysteine pairs are disulfide-bonded: cysteine 86–cysteine 97 and cysteine 108–cysteine 125. Residues 150-162 (FKRIVQRIKDFLQ) form an active core region.

This sequence belongs to the cathelicidin family. Monomer, homodimer or homotrimer (in vitro). Oligomerizes as tetra- or hexamer in solution (in vitro). Proteolytically cleaved by proteinase PRTN3 into antibacterial peptide LL-37. Proteolytically cleaved by cathepsin CTSG and neutrophil elastase ELANE. In terms of processing, resistant to proteolytic degradation in solution, and when bound to both zwitterionic (mimicking mammalian membranes) and negatively charged membranes (mimicking bacterial membranes). Post-translationally, after secretion onto the skin surface, the CAMP gene product is processed by a serine protease-dependent mechanism into multiple novel antimicrobial peptides distinct from and shorter than cathelicidin LL-37. These peptides show enhanced antimicrobial action, acquiring the ability to kill skin pathogens such as S.aureus, E.coli and C.albicans. These peptides have lost the ability to stimulate CXCL8/IL8 release from keratinocytes. The peptides act synergistically, killing bacteria at lower concentrations when present together, and maintain activity at increased salt condition.

The protein resides in the secreted. It is found in the vesicle. In terms of biological role, antimicrobial protein that is an integral component of the innate immune system. Binds to bacterial lipopolysaccharides (LPS). Acts via neutrophil N-formyl peptide receptors to enhance the release of CXCL2. Postsecretory processing generates multiple cathelicidin antimicrobial peptides with various lengths which act as a topical antimicrobial defense in sweat on skin. The unprocessed precursor form, cathelicidin antimicrobial peptide, inhibits the growth of Gram-negative E.coli and E.aerogenes with efficiencies comparable to that of the mature peptide LL-37 (in vitro). Its function is as follows. Antimicrobial peptide that is an integral component of the innate immune system. Binds to bacterial lipopolysaccharides (LPS). Causes membrane permeabilization by forming transmembrane pores (in vitro). Causes lysis of E.coli. Exhibits antimicrobial activity against Gram-negative bacteria such as P.aeruginosa, S.typhimurium, E.aerogenes, E.coli and P.syringae, Gram-positive bacteria such as L.monocytogenes, S.epidermidis, S.pyogenes and S.aureus, as well as vancomycin-resistant enterococci (in vitro). Exhibits antimicrobial activity against methicillin-resistant S.aureus, P.mirabilis, and C.albicans in low-salt media, but not in media containing 100 mM NaCl (in vitro). Forms chiral supramolecular assemblies with quinolone signal (PQS) molecules of P.aeruginosa, which may lead to interference of bacterial quorum signaling and perturbance of bacterial biofilm formation. May form supramolecular fiber-like assemblies on bacterial membranes. Induces cytokine and chemokine producation as well as TNF/TNFA and CSF2/GMCSF production in normal human keratinocytes. Exhibits hemolytic activity against red blood cells. Functionally, exhibits antimicrobial activity against E.coli and B.megaterium (in vitro). The polypeptide is Cathelicidin antimicrobial peptide (Nomascus leucogenys (Northern white-cheeked gibbon)).